The chain runs to 124 residues: Holo-[acyl-carrier-protein] synthase (124 aa).

The Mg(2+) site is built by D8 and E56.

This sequence belongs to the P-Pant transferase superfamily. AcpS family. It depends on Mg(2+) as a cofactor.

It localises to the cytoplasm. The catalysed reaction is apo-[ACP] + CoA = holo-[ACP] + adenosine 3',5'-bisphosphate + H(+). Transfers the 4'-phosphopantetheine moiety from coenzyme A to a Ser of acyl-carrier-protein. The chain is Holo-[acyl-carrier-protein] synthase from Clostridium acetobutylicum (strain ATCC 824 / DSM 792 / JCM 1419 / IAM 19013 / LMG 5710 / NBRC 13948 / NRRL B-527 / VKM B-1787 / 2291 / W).